Here is a 149-residue protein sequence, read N- to C-terminus: Cytochrome c-type biogenesis protein CcmE (149 aa).

At 1 to 7 (MTRKQKR) the chain is on the cytoplasmic side. The chain crosses the membrane as a helical; Signal-anchor for type II membrane protein span at residues 8-28 (LAVIAGGMGFIATAVLLVLFA). The Periplasmic segment spans residues 29-149 (FSQSVAYFYM…GVWKGEEASQ (121 aa)). Positions 123 and 127 each coordinate heme.

This sequence belongs to the CcmE/CycJ family.

The protein resides in the cell inner membrane. Its function is as follows. Heme chaperone required for the biogenesis of c-type cytochromes. Transiently binds heme delivered by CcmC and transfers the heme to apo-cytochromes in a process facilitated by CcmF and CcmH. This chain is Cytochrome c-type biogenesis protein CcmE, found in Rhizobium rhizogenes (strain K84 / ATCC BAA-868) (Agrobacterium radiobacter).